The chain runs to 417 residues: Phosphatidylcholine:ceramide cholinephosphotransferase 1 (417 aa).

The region spanning 11–74 is the SAM domain; it reads WSPEEVTNWL…LHMIETLKMA (64 aa). 5 helical membrane passes run 140–160, 188–208, 219–239, 280–300, and 308–328; these read FLAFIYALFCFIFTTVTISVV, FSICEINGMILVGLWLVQWLL, FFCIVCTLYLYRCITMYVTTL, MCGDYLYSGHTVILTLTYLFI, and LWWYHWLCWTLSMVGMFCILL. The active site involves histidine 289. The Cytoplasmic segment spans residues 329 to 417; that stretch reads AHDHYTVDVV…VKYSRLVNDT (89 aa). Residues histidine 332 and aspartate 336 contribute to the active site.

Belongs to the sphingomyelin synthase family.

It is found in the golgi apparatus membrane. It carries out the reaction an N-acylsphing-4-enine + a 1,2-diacyl-sn-glycero-3-phosphocholine = a sphingomyelin + a 1,2-diacyl-sn-glycerol. It catalyses the reaction an N-acylsphing-4-enine + a 1,2-diacyl-sn-glycero-3-phosphoethanolamine = an N-acylsphing-4-enine 1-phosphoethanolamine + a 1,2-diacyl-sn-glycerol. Functionally, major sphingomyelin synthase at the Golgi apparatus. Catalyzes the reversible transfer of phosphocholine moiety in sphingomyelin biosynthesis: in the forward reaction transfers phosphocholine head group of phosphatidylcholine (PC) on to ceramide (CER) to form ceramide phosphocholine (sphingomyelin, SM) and diacylglycerol (DAG) as by-product, and in the reverse reaction transfers phosphocholine from SM to DAG to form PC and CER. The direction of the reaction depends on the levels of CER and DAG in Golgi membranes. Converts the newly synthesized CER, that is transported from the endoplasmic reticulum to the trans-Golgi by the Cer transport protein (CERT), to SM. Can form a heteromeric complex with glucosylceramide synthase (GCS) increasing SMS activity and reducing glucosylceramide synthesis, a critical mechanism that controls the metabolic fate of CER in the Golgi. Does not use free phosphorylcholine or CDP-choline as donor. Can also transfer phosphoethanolamine head group of phosphatidylethanolamine (PE) on to CER to form ceramide phosphoethanolamine (CPE). Regulates receptor-mediated signal transduction via mitogenic DAG and proapoptotic CER, as well as via SM, a structural component of membrane rafts that serve as platforms for signal transduction and protein sorting. Plays a role in secretory transport via regulation of DAG pool at the Golgi apparatus and its downstream effects on PRKD1. The protein is Phosphatidylcholine:ceramide cholinephosphotransferase 1 (SGMS1) of Gallus gallus (Chicken).